We begin with the raw amino-acid sequence, 226 residues long: ATP-dependent dethiobiotin synthetase BioD (226 aa).

ATP is bound at residue 12–17; sequence EVGKTV. A Mg(2+)-binding site is contributed by T16. K39 is a catalytic residue. A substrate-binding site is contributed by T43. ATP-binding positions include D47, 108 to 111, 168 to 169, and 200 to 202; these read EALG, NC, and PYI. Positions 47 and 108 each coordinate Mg(2+).

Belongs to the dethiobiotin synthetase family. As to quaternary structure, homodimer. Requires Mg(2+) as cofactor.

It is found in the cytoplasm. It catalyses the reaction (7R,8S)-7,8-diammoniononanoate + CO2 + ATP = (4R,5S)-dethiobiotin + ADP + phosphate + 3 H(+). The enzyme catalyses (7R,8S)-8-amino-7-(carboxyamino)nonanoate + ATP = (4R,5S)-dethiobiotin + ADP + phosphate + H(+). It functions in the pathway cofactor biosynthesis; biotin biosynthesis; biotin from 7,8-diaminononanoate: step 1/2. Its function is as follows. Catalyzes a mechanistically unusual reaction, the ATP-dependent insertion of CO2 between the N7 and N8 nitrogen atoms of 7,8-diaminopelargonic acid (DAPA, also called 7,8-diammoniononanoate) to form a ureido ring. This cyanobacterium does not encode bioA (which catalyzes the formation of the precursor for this reaction in the cannonical pathway), instead it encodes bioU, which replaces bioA and also performs the first half of the cannonical BioD reaction. Thus in this organism BioD has a different substrate. In Gloeothece citriformis (strain PCC 7424) (Cyanothece sp. (strain PCC 7424)), this protein is ATP-dependent dethiobiotin synthetase BioD.